Reading from the N-terminus, the 4351-residue chain is Protocadherin Fat 2 (4351 aa).

Positions 1–18 (MTLVLLGVAMVLLHRAAC) are cleaved as a signal peptide. Topologically, residues 19–4050 (EKPLEETITP…IKRGDWGQQE (4032 aa)) are extracellular. 2 consecutive Cadherin domains span residues 34–148 (THSL…KPLF) and 149–256 (SPPS…PPVI). N-linked (GlcNAc...) asparagine glycosylation is found at Asn39, Asn210, Asn280, and Asn330. 31 Cadherin domains span residues 363-458 (EKAV…APVF), 459-564 (NRSS…QPMF), 565-669 (EEVN…VPVQ), 716-820 (DHFP…PPRF), 821-925 (PPGG…PPQC), 926-1032 (ITEH…SPHF), 1033-1142 (SSFV…RPVF), 1138-1242 (SRPV…SPMF), 1243-1346 (SHKL…SSIP), 1350-1448 (DESH…RPQF), 1449-1555 (LQDH…SPHF), 1556-1660 (TQPR…APIF), 1661-1758 (SKDE…APAF), 1759-1872 (LKST…PPRF), 1873-1968 (SEQI…SLQF), 1969-2070 (DQDI…IPEF), 2071-2171 (QHLP…NPLF), 2172-2272 (QSPY…PPTF), 2273-2379 (SQLV…PPEF), 2380-2481 (REPQ…SPEF), 2482-2585 (QQNV…APQF), 2586-2692 (KASG…LPKF), 2693-2799 (SEPL…RPVF), 2800-2908 (EADP…PPRF), 2909-3013 (ASED…SPQC), 3014-3115 (SQLL…APRF), 3116-3220 (FPSH…LPIF), 3221-3323 (LNSE…HPRF), 3324-3428 (THDL…PPRF), 3429-3533 (FQLN…PPST), and 3534-3631 (LPLE…APQQ). N-linked (GlcNAc...) asparagine glycans are attached at residues Asn459, Asn568, Asn627, and Asn789. A glycan (N-linked (GlcNAc...) asparagine) is linked at Asn996. 3 N-linked (GlcNAc...) asparagine glycosylation sites follow: Asn1175, Asn1276, and Asn1417. 13 N-linked (GlcNAc...) asparagine glycosylation sites follow: Asn1899, Asn1998, Asn2007, Asn2102, Asn2165, Asn2183, Asn2325, Asn2368, Asn2387, Asn2430, Asn2470, Asn2547, and Asn2597. 3 N-linked (GlcNAc...) asparagine glycosylation sites follow: Asn3127, Asn3278, and Asn3312. N-linked (GlcNAc...) asparagine glycans are attached at residues Asn3432, Asn3603, Asn3770, Asn3774, Asn3815, Asn3842, Asn3875, and Asn3906. The Laminin G-like domain maps to 3775 to 3946 (GTTWRFSGQS…YLETWALSQC (172 aa)). Intrachain disulfides connect Cys3914-Cys3946, Cys3953-Cys3964, Cys3958-Cys3974, and Cys3976-Cys3985. EGF-like domains follow at residues 3949–3986 (PGTT…RNCE) and 3988–4024 (GREN…DRCE). N-linked (GlcNAc...) asparagine glycosylation is present at Asn3991. Intrachain disulfides connect Cys3992–Cys4003, Cys3997–Cys4012, and Cys4014–Cys4023. Residues 4051-4071 (FLVIIVALPLLIIATVGLLLY) traverse the membrane as a helical segment. The Cytoplasmic segment spans residues 4072-4351 (CRRCKSHKPV…DYGSCEEVMF (280 aa)). Residues 4313–4340 (DCEVNGGPAPGRSQPRAPPNYEGSDMVE) form a disordered region.

As to quaternary structure, homodimer.

Its subcellular location is the cell membrane. The protein resides in the cell junction. It is found in the golgi apparatus. The protein localises to the trans-Golgi network. Its function is as follows. Involved in the regulation of cell migration. May be involved in mediating the organization of the parallel fibers of granule cells during cerebellar development. The sequence is that of Protocadherin Fat 2 (Fat2) from Mus musculus (Mouse).